A 246-amino-acid polypeptide reads, in one-letter code: MTTGDCCHLPGSLCDCSSSPAFSKVVEATGLGPPQYVAQVTSRDGRLLSTVIRALDTPSDCPFCRICHEGANGENLLSPCGCTGTLGAVHKSCLEKWLSSSNTSYCELCHTEFAVEKRPRPLTEWLKDPGPRTEKRTLCCDMVCFVFITPLAAISGWLCLRGAQDHLRLHSRLEAVGLIALTIALFTIYVLWTLVSFRYHCQLYSEWRKTNQKVRLKIREADGSEDPHHSLLATGLLKKVAEETPV.

The RING-CH-type zinc finger occupies D56–E116. Positions 64, 67, 80, 82, 90, 93, 106, and 109 each coordinate Zn(2+). Residues P121 to V246 are required for interaction with IKBKG. Helical transmembrane passes span L138–L158 and A175–V195.

In terms of assembly, interacts with STX6; the interaction promotes MARCHF2-mediated ubiquitination and degradation of CFTR. Interacts with MARCHF3. Interacts with GOPC/CAL; the interaction leads to CFTR ubiquitination and degradation. Interacts with CFTR; the interaction leads to CFTR ubiqtuitination and degradation. Interacts (via PDZ domain) with DLG1 (via PDZ domains); the interaction leads to DLG1 ubiqtuitination and degradation. Interacts with ERGIC3. Interacts with ADRB2. Interacts with IKBKG/NEMO; during the late stages of macrophage viral and bacterial infection; the interaction leads to ubiquitination and degradation of IKBKG/NEMO. Ubiquitously expressed. Present in liver (at protein level).

The protein resides in the endoplasmic reticulum membrane. Its subcellular location is the lysosome membrane. It is found in the endosome membrane. The protein localises to the golgi apparatus membrane. It localises to the cytoplasm. The protein resides in the cell membrane. The catalysed reaction is S-ubiquitinyl-[E2 ubiquitin-conjugating enzyme]-L-cysteine + [acceptor protein]-L-lysine = [E2 ubiquitin-conjugating enzyme]-L-cysteine + N(6)-ubiquitinyl-[acceptor protein]-L-lysine.. It functions in the pathway protein modification; protein ubiquitination. Its function is as follows. E3 ubiquitin-protein ligase that may mediate ubiquitination of TFRC and CD86, and promote their subsequent endocytosis and sorting to lysosomes via multivesicular bodies. E3 ubiquitin ligases accept ubiquitin from an E2 ubiquitin-conjugating enzyme in the form of a thioester and then directly transfer the ubiquitin to targeted substrates. Together with GOPC/CAL mediates the ubiquitination and lysosomal degradation of CFTR. Ubiquitinates and therefore mediates the degradation of DLG1. Regulates the intracellular trafficking and secretion of alpha1-antitrypsin/SERPINA1 and HP/haptoglobin via ubiquitination and degradation of the cargo receptor ERGIC3. Negatively regulates the antiviral and antibacterial immune response by repression of the NF-kB and type 1 IFN signaling pathways, via MARCHF2-mediated K48-linked polyubiquitination of IKBKG/NEMO, resulting in its proteasomal degradation. May be involved in endosomal trafficking through interaction with STX6. This chain is E3 ubiquitin-protein ligase MARCHF2 (Marchf2), found in Rattus norvegicus (Rat).